Here is a 462-residue protein sequence, read N- to C-terminus: Integrator complex subunit 12 (462 aa).

Residues 42–132 (GIDSSYRPSQ…PETQSSPITV (91 aa)) form a disordered region. Positions 59–86 (ISSTKNISIKQEPKISSSLPSGNNNGKV) are enriched in polar residues. Residue K68 forms a Glycyl lysine isopeptide (Lys-Gly) (interchain with G-Cter in SUMO2) linkage. The segment covering 88–124 (TTEKVKKEAEKRPADKMKSDITEGVDIPKKPRLEKPE) has biased composition (basic and acidic residues). Residue S128 is modified to Phosphoserine. The segment at 159–215 (GLACVVCRQMMVASGNQLVECQECHNLYHRDCHKPQVTDKEANDPRLVWYCARCTRQ) adopts a PHD-type zinc-finger fold. Residue K254 forms a Glycyl lysine isopeptide (Lys-Gly) (interchain with G-Cter in SUMO2) linkage. Residues 301–328 (SSAGPSTAKLSSTTQNNTGKPATSSANQ) show a composition bias toward polar residues. The disordered stretch occupies residues 301–462 (SSAGPSTAKL…KKAAQKKLKK (162 aa)). Low complexity-rich tracts occupy residues 347–358 (KIGSNNSTTPTV) and 382–437 (VSKV…GPTS). A compositionally biased stretch (basic residues) spans 449–462 (QMVKKKAAQKKLKK).

This sequence belongs to the Integrator subunit 12 family. As to quaternary structure, component of the Integrator complex, composed of core subunits INTS1, INTS2, INTS3, INTS4, INTS5, INTS6, INTS7, INTS8, INTS9/RC74, INTS10, INTS11/CPSF3L, INTS12, INTS13, INTS14 and INTS15. The core complex associates with protein phosphatase 2A subunits PPP2CA and PPP2R1A, to form the Integrator-PP2A (INTAC) complex. Dephosphorylated at Ser-128 by the PNUTS-PP1 complex, promoting RNA polymerase II transcription pause-release.

Its subcellular location is the nucleus. Its function is as follows. Component of the integrator complex, a multiprotein complex that terminates RNA polymerase II (Pol II) transcription in the promoter-proximal region of genes. The integrator complex provides a quality checkpoint during transcription elongation by driving premature transcription termination of transcripts that are unfavorably configured for transcriptional elongation: the complex terminates transcription by (1) catalyzing dephosphorylation of the C-terminal domain (CTD) of Pol II subunit POLR2A/RPB1 and SUPT5H/SPT5, (2) degrading the exiting nascent RNA transcript via endonuclease activity and (3) promoting the release of Pol II from bound DNA. The integrator complex is also involved in terminating the synthesis of non-coding Pol II transcripts, such as enhancer RNAs (eRNAs), small nuclear RNAs (snRNAs), telomerase RNAs and long non-coding RNAs (lncRNAs). Mediates recruitment of cytoplasmic dynein to the nuclear envelope, probably as component of the integrator complex. The sequence is that of Integrator complex subunit 12 from Homo sapiens (Human).